We begin with the raw amino-acid sequence, 90 residues long: U7-theraphotoxin-Hhn1a 7 (90 aa).

The signal sequence occupies residues 1–19; that stretch reads MKTAIFTVVLALAVFAVLS. Positions 20 to 50 are excised as a propeptide; it reads FGWEANEKALSEGFTELIHEKEAASETEARE. 3 disulfides stabilise this stretch: C51/C65, C58/C70, and C64/C81.

It belongs to the neurotoxin 10 (Hwtx-1) family. 13 (Hntx-13) subfamily. As to expression, expressed by the venom gland.

It localises to the secreted. Functionally, ion channel inhibitor. The chain is U7-theraphotoxin-Hhn1a 7 from Cyriopagopus hainanus (Chinese bird spider).